A 344-amino-acid polypeptide reads, in one-letter code: uncharacterized protein (344 aa).

The segment covering 323–332 (KQQEQREQGR) has biased composition (basic and acidic residues). A disordered region spans residues 323 to 344 (KQQEQREQGRRAAYLQQRGMER).

This is an uncharacterized protein from Bacillus anthracis.